The primary structure comprises 497 residues: 3-octaprenyl-4-hydroxybenzoate carboxy-lyase (497 aa).

Asn175 provides a ligand contact to Mn(2+). Residues 178 to 180 (IYR), 192 to 194 (RWL), and 197 to 198 (RG) contribute to the prenylated FMN site. Position 241 (Glu241) interacts with Mn(2+). The Proton donor role is filled by Asp290.

This sequence belongs to the UbiD family. Homohexamer. The cofactor is prenylated FMN. Mn(2+) is required as a cofactor.

It localises to the cell membrane. It catalyses the reaction a 4-hydroxy-3-(all-trans-polyprenyl)benzoate + H(+) = a 2-(all-trans-polyprenyl)phenol + CO2. It participates in cofactor biosynthesis; ubiquinone biosynthesis. Catalyzes the decarboxylation of 3-octaprenyl-4-hydroxy benzoate to 2-octaprenylphenol, an intermediate step in ubiquinone biosynthesis. The chain is 3-octaprenyl-4-hydroxybenzoate carboxy-lyase from Shigella boydii serotype 4 (strain Sb227).